We begin with the raw amino-acid sequence, 267 residues long: Kit ligand (267 aa).

Positions 1–25 (MKKTQTWIITCIYLQLLLFNPLVHT) are cleaved as a signal peptide. At Gln26 the chain carries Pyrrolidone carboxylic acid. Residues 26-215 (QGICRNRVTD…SNSIEDSSLQ (190 aa)) are Extracellular-facing. Intrachain disulfides connect Cys29-Cys114 and Cys68-Cys164. N-linked (GlcNAc...) asparagine glycosylation is found at Asn90, Asn97, Asn145, and Asn196. The helical transmembrane segment at 216–238 (WAAVALPAFFSLVIGFAFGALYW) threads the bilayer. The Cytoplasmic portion of the chain corresponds to 239–267 (KKKQPNLTRTVENRQINEEDNEISMLQEK).

It belongs to the SCF family. As to quaternary structure, homodimer, non-covalently linked. Heterotetramer with KIT, binding two KIT molecules; thereby mediates KIT dimerization and subsequent activation by autophosphorylation. A soluble form is produced by proteolytic processing of the extracellular domain.

Its subcellular location is the cytoplasm. The protein localises to the cytoskeleton. It localises to the cell membrane. The protein resides in the cell projection. It is found in the lamellipodium. Its subcellular location is the filopodium. The protein localises to the secreted. In terms of biological role, ligand for the receptor-type protein-tyrosine kinase KIT. Plays an essential role in the regulation of cell survival and proliferation, hematopoiesis, stem cell maintenance, gametogenesis, mast cell development, migration and function, and in melanogenesis. KITLG/SCF binding can activate several signaling pathways. Promotes phosphorylation of PIK3R1, the regulatory subunit of phosphatidylinositol 3-kinase, and subsequent activation of the kinase AKT1. KITLG/SCF and KIT also transmit signals via GRB2 and activation of RAS, RAF1 and the MAP kinases MAPK1/ERK2 and/or MAPK3/ERK1. KITLG/SCF and KIT promote activation of STAT family members STAT1, STAT3 and STAT5. KITLG/SCF and KIT promote activation of PLCG1, leading to the production of the cellular signaling molecules diacylglycerol and inositol 1,4,5-trisphosphate. KITLG/SCF acts synergistically with other cytokines, probably interleukins. This is Kit ligand (KITLG) from Ovis aries (Sheep).